We begin with the raw amino-acid sequence, 560 residues long: 2-succinylbenzoate--CoA ligase, chloroplastic/peroxisomal (560 aa).

Residues 1–15 (MANHSRPHICQCLTR) constitute a chloroplast transit peptide. 3 helical membrane passes run 69–89 (LFLE…PLNY), 189–209 (GVTI…AIAG), and 225–245 (IGGL…VLLP). The Microbody targeting signal signature appears at 558–560 (SSL).

Belongs to the ATP-dependent AMP-binding enzyme family. MenE subfamily. As to expression, high expression in young leaves and flowers. Not expressed in roots.

The protein localises to the plastid. It is found in the chloroplast membrane. Its subcellular location is the peroxisome membrane. It catalyses the reaction 2-succinylbenzoate + ATP + CoA = 2-succinylbenzoyl-CoA + AMP + diphosphate. In terms of biological role, involved in the biosynthesis of phylloquinone (vitamin K1). Converts 2-succinylbenzoate (OSB) to 2-succinylbenzoyl-CoA (OSB-CoA). The protein is 2-succinylbenzoate--CoA ligase, chloroplastic/peroxisomal (AAE14) of Arabidopsis thaliana (Mouse-ear cress).